Consider the following 405-residue polypeptide: Accessory Sec system protein translocase subunit SecY2 (405 aa).

The next 10 membrane-spanning stretches (helical) occupy residues L14–V34, I65–F85, M104–V124, I131–L151, A156–P176, G191–Y211, M247–F267, P285–V305, F343–L363, and L368–I388.

This sequence belongs to the SecY/SEC61-alpha family. SecY2 subfamily. Component of the accessory SecA2/SecY2 protein translocase complex required to export cell wall proteins. May form heterotrimers with SecE and SecG subunits.

Its subcellular location is the cell membrane. Its function is as follows. Part of the accessory SecA2/SecY2 system specifically required for export of possible cell wall proteins. The central subunit of a protein translocation channel. The chain is Accessory Sec system protein translocase subunit SecY2 from Streptococcus pneumoniae serotype 4 (strain ATCC BAA-334 / TIGR4).